Consider the following 99-residue polypeptide: RNA-binding protein Hfq (99 aa).

Residues 9 to 68 (DPFLNALRRERVPVSIYLVNGIKLQGQIESFDQFVILLKNTVSQMVYKHAISTVVPSRPV) enclose the Sm domain. The tract at residues 64–99 (PSRPVSHHSNNPGGSNNYHGSNTTAQQQSQDADDAE) is disordered. Residues 70–93 (HHSNNPGGSNNYHGSNTTAQQQSQ) show a composition bias toward low complexity.

The protein belongs to the Hfq family. In terms of assembly, homohexamer.

In terms of biological role, RNA chaperone that binds small regulatory RNA (sRNAs) and mRNAs to facilitate mRNA translational regulation in response to envelope stress, environmental stress and changes in metabolite concentrations. Also binds with high specificity to tRNAs. The polypeptide is RNA-binding protein Hfq (Pectobacterium atrosepticum (strain SCRI 1043 / ATCC BAA-672) (Erwinia carotovora subsp. atroseptica)).